A 639-amino-acid chain; its full sequence is Chaperone protein DnaK (639 aa).

T196 is modified (phosphothreonine; by autocatalysis). Residues 592–639 (ASSLYQTPDAGAPGASGPSAGGEPETGKKGGDGEVQNAEYEVIDGNDK) are disordered. Residues 601–613 (AGAPGASGPSAGG) are compositionally biased toward low complexity.

It belongs to the heat shock protein 70 family.

Functionally, acts as a chaperone. The sequence is that of Chaperone protein DnaK from Chlorobium limicola (strain DSM 245 / NBRC 103803 / 6330).